Reading from the N-terminus, the 499-residue chain is MEVRSESNITQARSDKLPLPPAVPKPRVQVWFVRVCSSILVWTCLVQLFAAGELWHSRIFTGLTNQISRFSAPVEPVPLPPPLPPPRNYTSNGILLVSCNGGLNQMRSAICDMVTVARLLNLTLVVPELDKTSFWADPSGFEDIFDVRHFIDSLRDEVRILRRLPKRFSRKYGYQMFEMPPVSWSDEKYYLKQVLPLFSKHKVVHFNRTDTRLANNGLPLSLQWLRCRVNFQGLKFTPQLEALGSKLVRILQQRGPFVALHLRYEMDMLAFSGCTHGCTEEEAEELKKMRYTYPWWREKEIVSEERRAQGLCPLTPEEVALVLKALGFEKNTQIYIAAGEIYGSEHRLSVLREAFPRIVKKEMLLESAELQQFQNHSSQMAALDFMVSVASNTFIPTYDGNMAKVVEGHRRYLGYKKTILLDRKRLVELLDLHHNKTLTWDQFAVAVKEAHERRAGAPTHRRVISDKPKEEDYFYANPQECLCEGTNCHDLFGHRNLTH.

The chain crosses the membrane as a helical; Signal-anchor for type II membrane protein span at residues 31 to 50 (WFVRVCSSILVWTCLVQLFA). N-linked (GlcNAc...) asparagine glycans are attached at residues N88, N121, and N207. 261–263 (HLR) provides a ligand contact to substrate. Residues N375, N435, and N496 are each glycosylated (N-linked (GlcNAc...) asparagine).

This sequence belongs to the glycosyltransferase GT106 family.

The protein localises to the golgi apparatus membrane. It carries out the reaction alpha-D-galacturonosyl-[(1-&gt;2)-alpha-L-rhamnosyl-(1-&gt;4)-alpha-D-galacturonosyl](n) + UDP-beta-L-rhamnose = [(1-&gt;2)-alpha-L-rhamnosyl-(1-&gt;4)-alpha-D-galacturonosyl](n+1) + UDP + H(+). It participates in glycan metabolism; pectin biosynthesis. Its function is as follows. Glycosyltransferase involved in the formation of rhamnogalacturonan I (RG-I) oligosaccharides in the seed coat mucilage, which is a specialized cell wall with abundant RG-I. Transfers the rhamnose residue from UDP-beta-L-rhamnose to RG-I oligosaccharides. The chain is Rhamnogalacturonan I rhamnosyltransferase 1 from Arabidopsis thaliana (Mouse-ear cress).